A 235-amino-acid polypeptide reads, in one-letter code: Large ribosomal subunit protein uL1 (235 aa).

Belongs to the universal ribosomal protein uL1 family. As to quaternary structure, part of the 50S ribosomal subunit.

Binds directly to 23S rRNA. The L1 stalk is quite mobile in the ribosome, and is involved in E site tRNA release. Functionally, protein L1 is also a translational repressor protein, it controls the translation of the L11 operon by binding to its mRNA. This chain is Large ribosomal subunit protein uL1, found in Methylibium petroleiphilum (strain ATCC BAA-1232 / LMG 22953 / PM1).